The sequence spans 326 residues: Beta-ketoacyl-[acyl-carrier-protein] synthase III 2 (326 aa).

Residues Cys114 and His251 contribute to the active site. The segment at 252-256 is ACP-binding; it reads SANAR. Residue Asn281 is part of the active site.

Belongs to the thiolase-like superfamily. FabH family. As to quaternary structure, homodimer.

The protein localises to the cytoplasm. It catalyses the reaction malonyl-[ACP] + acetyl-CoA + H(+) = 3-oxobutanoyl-[ACP] + CO2 + CoA. It functions in the pathway lipid metabolism; fatty acid biosynthesis. Catalyzes the condensation reaction of fatty acid synthesis by the addition to an acyl acceptor of two carbons from malonyl-ACP. Catalyzes the first condensation reaction which initiates fatty acid synthesis and may therefore play a role in governing the total rate of fatty acid production. Possesses both acetoacetyl-ACP synthase and acetyl transacylase activities. Its substrate specificity determines the biosynthesis of branched-chain and/or straight-chain of fatty acids. The polypeptide is Beta-ketoacyl-[acyl-carrier-protein] synthase III 2 (Staphylococcus epidermidis (strain ATCC 12228 / FDA PCI 1200)).